The sequence spans 510 residues: MRLLPQTNRILLPTTSSTACGANQLRMSSEKAVPCYEESVRLLNGLQSNAATIKKLRVQRENLQAINLPQCRKYLESLNISAEDLNALNIIHVSGTKGKGSACAFVESILRSQGLRTGFYSSPHLVHVRERIQVDGQPVSEQMFAEEFFHVYDIIKREHSDNMPAYFKFLTLLAFRIFVKLNVQVMILEVGIGGEYDCTNVVEKPKVCGVTTLDYDHMSILGNKLSEIAWHKAGIFKESVPAFYSPTTTEAEEVLIARAISKHVPLFQTPPVSAYQFARDISPGIRGAHQFSNVSMALQLVRAWAEKCGFPLPGVPLSTDTSGFNVPLWMCDAIESCRWPGRSQIVSTDRNVTYLLDGAHTPKSMEACSEWAAEEIVNLKKENVKKILLFQCTADRCPSTLIKYLKPLGISQIVSCPTQLHSSIDKSADSANLNASRDEQAEKANQCVQAWKESLDQPESVTEDQMKVFDCISSAYKFIESQAASQEILVLVTGSLHLVGGVLNLAGKGK.

Residue 98-101 coordinates ATP; sequence GKGS. Serine 122, glutamate 189, and histidine 217 together coordinate Mg(2+). Residues arginine 342 and aspartate 357 each coordinate ATP.

The protein belongs to the folylpolyglutamate synthase family. A monovalent cation serves as cofactor.

It localises to the mitochondrion inner membrane. The protein resides in the mitochondrion matrix. Its subcellular location is the cytoplasm. The catalysed reaction is (6S)-5,6,7,8-tetrahydrofolyl-(gamma-L-Glu)(n) + L-glutamate + ATP = (6S)-5,6,7,8-tetrahydrofolyl-(gamma-L-Glu)(n+1) + ADP + phosphate + H(+). Its pathway is cofactor biosynthesis; tetrahydrofolylpolyglutamate biosynthesis. Catalyzes conversion of folates to polyglutamate derivatives allowing concentration of folate compounds in the cell and the intracellular retention of these cofactors, which are important substrates for most of the folate-dependent enzymes that are involved in one-carbon transfer reactions involved in purine, pyrimidine and amino acid synthesis. This Caenorhabditis elegans protein is Putative folylpolyglutamate synthase.